A 151-amino-acid polypeptide reads, in one-letter code: Large-conductance mechanosensitive channel (151 aa).

2 helical membrane-spanning segments follow: residues 12–32 (GNIV…ALVT) and 71–91 (VLLS…FLVV). The tract at residues 125 to 151 (NSNSSGRHEAPGTAGTPPPNYGPRADT) is disordered.

It belongs to the MscL family. Homopentamer.

The protein localises to the cell membrane. Channel that opens in response to stretch forces in the membrane lipid bilayer. May participate in the regulation of osmotic pressure changes within the cell. In Mycobacterium ulcerans (strain Agy99), this protein is Large-conductance mechanosensitive channel.